Reading from the N-terminus, the 760-residue chain is MIIKVFLRLLLLCAHIVCIDGKLEIRPVVSGVRIESDVDASGFLGYGDAGELLVEANTEVDLVIFGHGLENVEMVTFTDSVCVTSEFNVSESTFYIHKDMKIVFKYAFVAWPQPWRICLKSECHGLIQIDDDRTWIQAVQSTHETFMPVWAQCAILCLLFSISALCSGLTLGLMALTPQELSILMKSGSQREKKHAAAIYPIRCHGNRLLCTVIIMNVIVNTGITLLFDDLAEGLIAFVASTVGIVVFGEILPQSICVKYGLAVGANTIFITKFFMFLLFPITWPLGKILDKYAGVDIDVVNRSRMVEMLKMNMENDACDIDLSTLKIAIGAMELTKKSVRDVMTDIDDVFMLSEDQVLNAETMTKISDSGYTRIPVFEGNNRNKVKNLLYVSDLALIGKDNNITVKAVARFNKRRLRIVDESMPLTALMDEFKLGDYHLAMVAKATEVKKHHHGKFADGTVDSFILKSMKLVEATMMPQVENPEDHPVTLVGLITLEDITEELLQAEITDETDCYVTDDAQKKRRTNTSKKSAAELFCSEKKSERLSLHMLEMTEKWLLEKTPLFGNMNPKAFENLIQRNIREVLIVPPKNSTSPGTLNLFEAGVMSKRFLLILEGKATIRFNEKDLIFECGPWTCFGEAILEKMEMCISDRKEPSTGFFFLPDYNLTVSGPCRFLQISTSSLLHSLRITQFVKEIRTPKISITSDDDFGSPTRKASILDSSPNSRKRSSTSVMNSLALPTARLAAKIASVEELKPLME.

The N-terminal stretch at 1 to 21 is a signal peptide; that stretch reads MIIKVFLRLLLLCAHIVCIDG. The Extracellular segment spans residues 22–153; that stretch reads KLEIRPVVSG…ETFMPVWAQC (132 aa). Asn88 carries N-linked (GlcNAc...) asparagine glycosylation. The CNNM transmembrane domain maps to 145–323; that stretch reads TFMPVWAQCA…MENDACDIDL (179 aa). A helical transmembrane segment spans residues 154–174; the sequence is AILCLLFSISALCSGLTLGLM. Over 175–208 the chain is Cytoplasmic; it reads ALTPQELSILMKSGSQREKKHAAAIYPIRCHGNR. A helical membrane pass occupies residues 209 to 229; sequence LLCTVIIMNVIVNTGITLLFD. Asp230 is a topological domain (extracellular). The helical transmembrane segment at 231-251 threads the bilayer; it reads LAEGLIAFVASTVGIVVFGEI. Residues 252–261 are Cytoplasmic-facing; the sequence is LPQSICVKYG. A helical transmembrane segment spans residues 262 to 282; that stretch reads LAVGANTIFITKFFMFLLFPI. At 283–760 the chain is on the extracellular side; the sequence is TWPLGKILDK…SVEELKPLME (478 aa). Asn302 and Asn403 each carry an N-linked (GlcNAc...) asparagine glycan. CBS domains lie at 344–406 and 442–512; these read MTDI…NITV and MVAK…ITDE. Asn528, Asn592, and Asn667 each carry an N-linked (GlcNAc...) asparagine glycan. The disordered stretch occupies residues 708–734; the sequence is DDFGSPTRKASILDSSPNSRKRSSTSV.

It belongs to the ACDP family.

It localises to the cell membrane. In terms of biological role, probable metal transporter. Probably acts redundantly with the other metal transport proteins cnnm-1, cnnm-3, cnnm-4 and cnnm-5 to regulate Mg(2+) homeostasis. This chain is Metal transporter cnnm-2, found in Caenorhabditis elegans.